The sequence spans 79 residues: Acyl carrier protein (79 aa).

The Carrier domain maps to 2–77 (SEIGERVKKI…DAVKFLEKNA (76 aa)). Residue S37 is modified to O-(pantetheine 4'-phosphoryl)serine.

It belongs to the acyl carrier protein (ACP) family. Post-translationally, 4'-phosphopantetheine is transferred from CoA to a specific serine of apo-ACP by AcpS. This modification is essential for activity because fatty acids are bound in thioester linkage to the sulfhydryl of the prosthetic group.

Its subcellular location is the cytoplasm. It participates in lipid metabolism; fatty acid biosynthesis. Functionally, carrier of the growing fatty acid chain in fatty acid biosynthesis. In Rhodopseudomonas palustris (strain BisA53), this protein is Acyl carrier protein.